Here is a 431-residue protein sequence, read N- to C-terminus: Serine hydroxymethyltransferase 2 (431 aa).

Residues leucine 131 and 135 to 137 (GHL) contribute to the (6S)-5,6,7,8-tetrahydrofolate site. At lysine 240 the chain carries N6-(pyridoxal phosphate)lysine. Residue glutamate 256 participates in (6S)-5,6,7,8-tetrahydrofolate binding.

It belongs to the SHMT family. As to quaternary structure, homodimer. It depends on pyridoxal 5'-phosphate as a cofactor.

Its subcellular location is the cytoplasm. It carries out the reaction (6R)-5,10-methylene-5,6,7,8-tetrahydrofolate + glycine + H2O = (6S)-5,6,7,8-tetrahydrofolate + L-serine. The protein operates within one-carbon metabolism; tetrahydrofolate interconversion. Its pathway is amino-acid biosynthesis; glycine biosynthesis; glycine from L-serine: step 1/1. Catalyzes the reversible interconversion of serine and glycine with tetrahydrofolate (THF) serving as the one-carbon carrier. This reaction serves as the major source of one-carbon groups required for the biosynthesis of purines, thymidylate, methionine, and other important biomolecules. Also exhibits THF-independent aldolase activity toward beta-hydroxyamino acids, producing glycine and aldehydes, via a retro-aldol mechanism. The sequence is that of Serine hydroxymethyltransferase 2 from Vibrio vulnificus (strain YJ016).